A 433-amino-acid polypeptide reads, in one-letter code: Glutamate--tRNA ligase 1 (433 aa).

The short motif at 7–17 (PSPTGLIHLGN) is the 'HIGH' region element. Residues 230-234 (KMSKR) carry the 'KMSKS' region motif. An ATP-binding site is contributed by lysine 233.

It belongs to the class-I aminoacyl-tRNA synthetase family. Glutamate--tRNA ligase type 1 subfamily. As to quaternary structure, monomer.

The protein localises to the cytoplasm. The catalysed reaction is tRNA(Glu) + L-glutamate + ATP = L-glutamyl-tRNA(Glu) + AMP + diphosphate. In terms of biological role, catalyzes the attachment of glutamate to tRNA(Glu) in a two-step reaction: glutamate is first activated by ATP to form Glu-AMP and then transferred to the acceptor end of tRNA(Glu). The sequence is that of Glutamate--tRNA ligase 1 from Neorickettsia sennetsu (strain ATCC VR-367 / Miyayama) (Ehrlichia sennetsu).